We begin with the raw amino-acid sequence, 285 residues long: Nudix hydrolase 15, mitochondrial (285 aa).

The transit peptide at 1-23 directs the protein to the mitochondrion; that stretch reads MFLLYRRLPSFARTTTTTLLCKS. Residue Met24 is modified to N-acetylmethionine. Disordered stretches follow at residues 51–72 and 129–152; these read RQYK…TDQE and THSG…GMTA. One can recognise a Nudix hydrolase domain in the interval 99 to 255; it reads PKRAAVLICL…DKDYMIWGLT (157 aa). The short motif at 140 to 161 is the Nudix box element; sequence KAEEDDKDDGMTATREAEEEIG. Residues Glu155 and Glu159 each contribute to the Mg(2+) site.

This sequence belongs to the Nudix hydrolase family. It depends on Mg(2+) as a cofactor. Requires Mn(2+) as cofactor. As to expression, expressed in roots, leaves, stems and inflorescences.

Its subcellular location is the mitochondrion. Coenzyme A diphosphatase which mediates the cleavage of oxidized CoA. Can use malonyl-CoA, hexanoyl-CoA, lauroyl-CoA, myristoyl-CoA and palmitoyl-CoA as substrates, but not isobutyryl-CoA or propionyl-CoA. The sequence is that of Nudix hydrolase 15, mitochondrial (NUDT15) from Arabidopsis thaliana (Mouse-ear cress).